The sequence spans 130 residues: Protein LLP homolog (130 aa).

Residues 1 to 21 are compositionally biased toward basic residues; that stretch reads MAKSLRSKWKRKMRAEKRKKN. 2 disordered regions span residues 1-23 and 57-76; these read MAKSLRSKWKRKMRAEKRKKNAP and QEKMQCEEGRCDGADEEKDD. Residues 10-78 are a coiled coil; sequence KRKMRAEKRK…GADEEKDDMK (69 aa). Residue Lys-78 forms a Glycyl lysine isopeptide (Lys-Gly) (interchain with G-Cter in SUMO2) linkage. Positions 104–124 are enriched in basic residues; it reads RQRKRLKAKREKKRGKSRAKA. The segment at 104–130 is disordered; it reads RQRKRLKAKREKKRGKSRAKAAKGLAW.

The protein belongs to the learning-associated protein family. As to quaternary structure, interacts with CTCF, MYO1C and with the transcriptional machinery, including RNA polymerase II and TBP. Widely expressed, with high levels in testis and spleen and low levels in heart. In the brain, expressed in the cortex and hippocampus, and at very low levels in the cerebellum.

The protein resides in the nucleus. It is found in the nucleolus. Its subcellular location is the chromosome. Its function is as follows. In hippocampal neurons, regulates dendritic and spine growth and synaptic transmission. The polypeptide is Protein LLP homolog (Llph) (Mus musculus (Mouse)).